Here is a 255-residue protein sequence, read N- to C-terminus: uncharacterized protein (255 aa).

Positions 1–23 (MKRLNTLVLYISFLILIISIVAG) are cleaved as a signal peptide. The N-palmitoyl cysteine moiety is linked to residue cysteine 24. Cysteine 24 carries the S-diacylglycerol cysteine lipid modification.

It belongs to the staphylococcal tandem lipoprotein family.

It localises to the cell membrane. This is an uncharacterized protein from Staphylococcus aureus (strain N315).